A 178-amino-acid polypeptide reads, in one-letter code: Large ribosomal subunit protein bL17 (178 aa).

Low complexity-rich tracts occupy residues 123–139 (KAPA…NTAT) and 151–160 (EDAAAQAPVA). The interval 123–178 (KAPASAADAKAQINTATEAKEAEPEAPAEDAAAQAPVADEQKAAEVDEKAEEKPEA) is disordered. Positions 161 to 178 (DEQKAAEVDEKAEEKPEA) are enriched in basic and acidic residues.

It belongs to the bacterial ribosomal protein bL17 family. In terms of assembly, part of the 50S ribosomal subunit. Contacts protein L32.

This chain is Large ribosomal subunit protein bL17, found in Cutibacterium acnes (strain DSM 16379 / KPA171202) (Propionibacterium acnes).